A 342-amino-acid polypeptide reads, in one-letter code: Pre-mRNA-splicing factor 18 (342 aa).

At Met1 the chain carries N-acetylmethionine.

This sequence belongs to the PRP18 family. In terms of assembly, heterodimer with PPIH. Interacts with PRPF4 and with the spliceosome. Part of a complex containing U4/U6 snRNPs.

The protein localises to the nucleus speckle. Its function is as follows. Participates in the second step of pre-mRNA splicing. The polypeptide is Pre-mRNA-splicing factor 18 (PRPF18) (Pongo abelii (Sumatran orangutan)).